The following is a 168-amino-acid chain: Ribosome maturation factor RimM (168 aa).

One can recognise a PRC barrel domain in the interval 92–166 (EDTFYKADLI…RITVDPIEGM (75 aa)).

The protein belongs to the RimM family. In terms of assembly, binds ribosomal protein uS19.

Its subcellular location is the cytoplasm. An accessory protein needed during the final step in the assembly of 30S ribosomal subunit, possibly for assembly of the head region. Essential for efficient processing of 16S rRNA. May be needed both before and after RbfA during the maturation of 16S rRNA. It has affinity for free ribosomal 30S subunits but not for 70S ribosomes. This Alkaliphilus metalliredigens (strain QYMF) protein is Ribosome maturation factor RimM.